Reading from the N-terminus, the 208-residue chain is Large ribosomal subunit protein uL4 (208 aa).

A disordered region spans residues 54-78 (RAEVSHTTKKPWNQKGTGRARAGMS).

It belongs to the universal ribosomal protein uL4 family. Part of the 50S ribosomal subunit.

One of the primary rRNA binding proteins, this protein initially binds near the 5'-end of the 23S rRNA. It is important during the early stages of 50S assembly. It makes multiple contacts with different domains of the 23S rRNA in the assembled 50S subunit and ribosome. Its function is as follows. Forms part of the polypeptide exit tunnel. This Methylobacillus flagellatus (strain ATCC 51484 / DSM 6875 / VKM B-1610 / KT) protein is Large ribosomal subunit protein uL4.